A 293-amino-acid chain; its full sequence is Phosphatidylcholine-sterol acyltransferase (293 aa).

N26 is a glycosylation site (N-linked (GlcNAc...) asparagine). The Nucleophile role is filled by S123. The N-linked (GlcNAc...) asparagine glycan is linked to N179. The cysteines at positions 220 and 263 are disulfide-linked. The active-site Charge relay system is the D252. N280 is a glycosylation site (N-linked (GlcNAc...) asparagine). H284 serves as the catalytic Charge relay system.

This sequence belongs to the AB hydrolase superfamily. Lipase family.

Its subcellular location is the secreted. It carries out the reaction a sterol + a 1,2-diacyl-sn-glycero-3-phosphocholine = a sterol ester + a 1-acyl-sn-glycero-3-phosphocholine. APOA1 is the most potent activator in plasma. Also activated by APOE, APOC1 and APOA4. In terms of biological role, central enzyme in the extracellular metabolism of plasma lipoproteins. Synthesized mainly in the liver and secreted into plasma where it converts cholesterol and phosphatidylcholines (lecithins) to cholesteryl esters and lysophosphatidylcholines on the surface of high and low density lipoproteins (HDLs and LDLs). The cholesterol ester is then transported back to the liver. Has a preference for plasma 16:0-18:2 or 18:O-18:2 phosphatidylcholines. Also produced in the brain by primary astrocytes, and esterifies free cholesterol on nascent APOE-containing lipoproteins secreted from glia and influences cerebral spinal fluid (CSF) APOE- and APOA1 levels. Together with APOE and the cholesterol transporter ABCA1, plays a key role in the maturation of glial-derived, nascent lipoproteins. Required for remodeling high-density lipoprotein particles into their spherical forms. This is Phosphatidylcholine-sterol acyltransferase (LCAT) from Gerbilliscus gambianus (Gambian gerbil).